The sequence spans 145 residues: Ribosomal protein uL24-like (145 aa).

2 disordered regions span residues 1-21 (MKFN…HFNA) and 122-145 (KAKS…KMQE). Glycyl lysine isopeptide (Lys-Gly) (interchain with G-Cter in SUMO2) cross-links involve residues Lys136 and Lys142.

It belongs to the universal ribosomal protein uL24 family.

This is Ribosomal protein uL24-like (RPL26L1) from Homo sapiens (Human).